The sequence spans 379 residues: Putative glutamate--cysteine ligase 2 (379 aa).

It belongs to the glutamate--cysteine ligase type 2 family. YbdK subfamily.

It catalyses the reaction L-cysteine + L-glutamate + ATP = gamma-L-glutamyl-L-cysteine + ADP + phosphate + H(+). Functionally, ATP-dependent carboxylate-amine ligase which exhibits weak glutamate--cysteine ligase activity. This Roseiflexus sp. (strain RS-1) protein is Putative glutamate--cysteine ligase 2.